The following is a 1110-amino-acid chain: cGMP-specific 3',5'-cyclic phosphodiesterase (1110 aa).

Composition is skewed to low complexity over residues 1–25 (MTDVSAAAGGATAPAETAATSSSAS) and 35–55 (TSTAMAAPTATPTTAATASGA). Disordered regions lie at residues 1–55 (MTDV…ASGA), 67–128 (ISNQ…QQDV), and 184–203 (ASPTVQQKSPRSLSNSSASS). Residues 88-103 (APYPPVPAAKPKPTPT) show a composition bias toward pro residues. Low complexity predominate over residues 192 to 203 (SPRSLSNSSASS). GAF domains are found at residues 233–385 (DIDV…GIGI) and 417–601 (NLEC…GLGI). The PDEase domain occupies 631 to 954 (SQDQTEKLTQ…RNWQDLAEKV (324 aa)). The active-site Proton donor is the His707. His711, His747, Asp748, and Asp858 together coordinate a divalent metal cation. 2 disordered regions span residues 997–1028 (AQHGAGAGGDDSHTPEHQRSGSRLSMKKTGAL) and 1040–1110 (LYNS…CSLL). 2 stretches are compositionally biased toward basic and acidic residues: residues 1006-1015 (DDSHTPEHQR) and 1056-1068 (LESHVSEDMDDKS). Residues 1082–1097 (GRMSASSSTSSAGTVV) show a composition bias toward low complexity. Residues 1100 to 1110 (SKKRSKLCSLL) show a composition bias toward basic residues. Cys1107 carries the cysteine methyl ester modification. Cys1107 is lipidated: S-farnesyl cysteine. A propeptide spans 1108–1110 (SLL) (removed in mature form).

This sequence belongs to the cyclic nucleotide phosphodiesterase family. As to quaternary structure, interacts with PrBP. Requires a divalent metal cation as cofactor.

Its subcellular location is the cell membrane. The catalysed reaction is 3',5'-cyclic GMP + H2O = GMP + H(+). Has a role regulating cGMP transport in Malpighian tubule principal cells. The protein is cGMP-specific 3',5'-cyclic phosphodiesterase of Drosophila pseudoobscura pseudoobscura (Fruit fly).